A 452-amino-acid polypeptide reads, in one-letter code: Inner membrane metabolite transport protein YdjE (452 aa).

The Cytoplasmic segment spans residues 1–20 (MEQYDQIGARLDRLPLARFH). Residues 21–43 (YRIFGIISFSLLLTGFLSYSGNV) traverse the membrane as a helical segment. Topologically, residues 44–57 (VLAKLVSNGWSNNF) are periplasmic. A helical transmembrane segment spans residues 58-80 (LNAAFTSALMFGYFIGSLTGGFI). Residues 81–91 (GDYFGRRRAFR) lie on the Cytoplasmic side of the membrane. A helical membrane pass occupies residues 92-114 (INLLIVGIAATGAAFVPDMYWLI). At 115–117 (FFR) the chain is on the periplasmic side. Residues 118–140 (FLMGTGMGALIMVGYASFTEFIP) form a helical membrane-spanning segment. The Cytoplasmic segment spans residues 141 to 152 (ATVRGKWSARLS). A helical membrane pass occupies residues 153–175 (FVGNWSPMLSAAIGVVVIAFFSW). Residues 176 to 178 (RIM) are Periplasmic-facing. A helical transmembrane segment spans residues 179-198 (FLLGGIGILLAWFLSGKYFI). The Cytoplasmic portion of the chain corresponds to 199–265 (ESPRWLAGKG…KGEMLRRTLV (67 aa)). The chain crosses the membrane as a helical span at residues 266–288 (AITVLIAMNISLYTITVWIPTIF). Residues 289–297 (VNSGIDVDK) are Periplasmic-facing. The helical transmembrane segment at 298-320 (SILMTAVIMIGAPVGIFIAALII) threads the bilayer. The Cytoplasmic portion of the chain corresponds to 321–326 (DHFPRR). A helical membrane pass occupies residues 327–344 (LFGSTLLIIIAVLGYIYS). Over 345-353 (IQTTEWAIL) the chain is Periplasmic. A helical transmembrane segment spans residues 354-376 (IYGLVMIFFLYMYVCFASAVYIP). Residues 377–388 (ELWPTHLRLRGS) are Cytoplasmic-facing. The chain crosses the membrane as a helical span at residues 389–411 (GFVNAVGRIVAVFTPYGVAALLT). The Periplasmic portion of the chain corresponds to 412–415 (HYGS). A helical membrane pass occupies residues 416–438 (ITVFMVLGVMLLLCALVLSIFGI). Residues 439–452 (ETRKVSLEEISEVN) lie on the Cytoplasmic side of the membrane.

Belongs to the major facilitator superfamily. Sugar transporter (TC 2.A.1.1) family.

It localises to the cell inner membrane. The sequence is that of Inner membrane metabolite transport protein YdjE (ydjE) from Escherichia coli (strain K12).